The primary structure comprises 244 residues: 5-oxoprolinase subunit A (244 aa).

Belongs to the LamB/PxpA family. Forms a complex composed of PxpA, PxpB and PxpC.

The enzyme catalyses 5-oxo-L-proline + ATP + 2 H2O = L-glutamate + ADP + phosphate + H(+). Catalyzes the cleavage of 5-oxoproline to form L-glutamate coupled to the hydrolysis of ATP to ADP and inorganic phosphate. The sequence is that of 5-oxoprolinase subunit A from Escherichia coli (strain SE11).